A 773-amino-acid polypeptide reads, in one-letter code: Leucine-rich repeat and calponin homology domain-containing protein 2 (773 aa).

Residues 1 to 46 (MAASQGGGGNSGGGGCSGGGSGGGGGAAGGGGGGGGGGGGGAGAGG) are disordered. 9 LRR repeats span residues 97 to 118 (NSGI…GYDL), 120 to 141 (DTTQ…VWLF), 143 to 164 (PLET…IKNL), 166 to 187 (MLTY…LFDL), 188 to 209 (PLKV…IGKL), 211 to 232 (DLME…MGKL), 234 to 256 (SLKE…GDLP), 257 to 277 (LVKL…YRKL), and 279 to 300 (HLQV…ICLK). 3 disordered regions span residues 324 to 409 (LDLP…QKDQ), 438 to 478 (FLKG…LKEV), and 573 to 633 (KYKS…SRQE). 2 stretches are compositionally biased toward basic and acidic residues: residues 386 to 396 (SNREQTSRNDS) and 440 to 466 (KGKE…KEQL). Residues 594 to 603 (AHMSAQSPVS) are compositionally biased toward polar residues. The Calponin-homology (CH) domain occupies 650–763 (LREEREQIRQ…VTVQALLELP (114 aa)).

Its function is as follows. May play a role in the organization of the cytoskeleton. This chain is Leucine-rich repeat and calponin homology domain-containing protein 2 (Lrch2), found in Mus musculus (Mouse).